Reading from the N-terminus, the 558-residue chain is MKLFKSILLIAACHAAQASAAIDINADPNLTGAAPLTGILNGQQSDTQNMSGFDNTPPPSPPVVMSRMFGAQLFNGTSADSGATVGFNPDYILNPGDSIQVRLWGAFTFDGALQVDPKGNIFLPNVGPVKVAGVSNSQLNALVTSKVKEVYQSNVNVYASLLQAQPVKVYVTGFVRNPGLYGGVTSDSLLNYLIKAGGVDPERGSYVDIVVKRGNRVRSNVNLYDFLLNGKLGLSQFADGDTIIVGPRQHTFSVQGDVFNSYDFEFRESSIPVTEALSWARPKPGATHITIMRKQGLQKRSEYYPISSAPGRMLQNGDTLIVSTDRYAGTIQVRVEGAHSGEHAMVLPYGSTMRAVLEKVRPNSMSQMNAVQLYRPSVAQRQKEMLNLSLQKLEEASLSAQSSTKEEASLRMQEAQLISRFVAKARTVVPKGEVILNESNIDSVLLEDGDVINIPEKTSLVMVHGEVLFPNAVSWQKGMTTEDYIEKCGGLTQKSGNARIIVIRQNGAAVNAEDVDSLKPGDEIMVLPKYESKNIEVTRGISTILYQLAVGAKVILSL.

The signal sequence occupies residues 1-20 (MKLFKSILLIAACHAAQASA).

To E.coli K5 KpsD.

The protein resides in the periplasm. In terms of biological role, involved in the translocation of the polysialic acid capsule across the outer membrane to the cell surface. May function as the periplasmic binding element of the PSA transport system, in which it transiently interacts with the membrane component of the transporter, binds polysaccharide and transports the polymer to a component in the outer membrane. This chain is Polysialic acid transport protein KpsD (kpsD), found in Escherichia coli.